A 138-amino-acid chain; its full sequence is ATP synthase epsilon chain (138 aa).

Belongs to the ATPase epsilon chain family. F-type ATPases have 2 components, CF(1) - the catalytic core - and CF(0) - the membrane proton channel. CF(1) has five subunits: alpha(3), beta(3), gamma(1), delta(1), epsilon(1). CF(0) has three main subunits: a, b and c.

The protein localises to the cell inner membrane. In terms of biological role, produces ATP from ADP in the presence of a proton gradient across the membrane. In Acidovorax ebreus (strain TPSY) (Diaphorobacter sp. (strain TPSY)), this protein is ATP synthase epsilon chain.